The chain runs to 23 residues: Chaperonin GroEL (23 aa).

This sequence belongs to the chaperonin (HSP60) family. In terms of assembly, forms a cylinder of 14 subunits composed of two heptameric rings stacked back-to-back. Interacts with the co-chaperonin GroES. In terms of processing, phosphorylated on threonine.

It localises to the cytoplasm. It carries out the reaction ATP + H2O + a folded polypeptide = ADP + phosphate + an unfolded polypeptide.. Functionally, together with its co-chaperonin GroES, plays an essential role in assisting protein folding. The GroEL-GroES system forms a nano-cage that allows encapsulation of the non-native substrate proteins and provides a physical environment optimized to promote and accelerate protein folding. This is Chaperonin GroEL from Acidithiobacillus ferrooxidans (Thiobacillus ferrooxidans).